The primary structure comprises 180 residues: NAD(P)H-quinone oxidoreductase subunit I, chloroplastic (180 aa).

2 4Fe-4S ferredoxin-type domains span residues 55-84 and 95-124; these read GRIH…VDWR and LNYS…MTEE. [4Fe-4S] cluster is bound by residues C64, C67, C70, C74, C104, C107, C110, and C114.

It belongs to the complex I 23 kDa subunit family. In terms of assembly, NDH is composed of at least 16 different subunits, 5 of which are encoded in the nucleus. Requires [4Fe-4S] cluster as cofactor.

Its subcellular location is the plastid. It localises to the chloroplast thylakoid membrane. It carries out the reaction a plastoquinone + NADH + (n+1) H(+)(in) = a plastoquinol + NAD(+) + n H(+)(out). The enzyme catalyses a plastoquinone + NADPH + (n+1) H(+)(in) = a plastoquinol + NADP(+) + n H(+)(out). NDH shuttles electrons from NAD(P)H:plastoquinone, via FMN and iron-sulfur (Fe-S) centers, to quinones in the photosynthetic chain and possibly in a chloroplast respiratory chain. The immediate electron acceptor for the enzyme in this species is believed to be plastoquinone. Couples the redox reaction to proton translocation, and thus conserves the redox energy in a proton gradient. This is NAD(P)H-quinone oxidoreductase subunit I, chloroplastic from Amborella trichopoda.